Here is a 149-residue protein sequence, read N- to C-terminus: Transcriptional repressor NrdR (149 aa).

A zinc finger lies at 3-34; that stretch reads CPFCDTEETKVIDSRLVSDGYQVRRRRECGHC. Residues 49 to 139 enclose the ATP-cone domain; the sequence is PKIIKTDGTR…VYLSFDDIDQ (91 aa).

It belongs to the NrdR family. The cofactor is Zn(2+).

Its function is as follows. Negatively regulates transcription of bacterial ribonucleotide reductase nrd genes and operons by binding to NrdR-boxes. The chain is Transcriptional repressor NrdR from Haemophilus influenzae (strain 86-028NP).